Consider the following 273-residue polypeptide: Orotidine 5'-phosphate decarboxylase (273 aa).

The active-site Proton donor is lysine 96.

The protein belongs to the OMP decarboxylase family. Type 2 subfamily.

It catalyses the reaction orotidine 5'-phosphate + H(+) = UMP + CO2. The protein operates within pyrimidine metabolism; UMP biosynthesis via de novo pathway; UMP from orotate: step 2/2. This Nocardioides sp. (strain ATCC BAA-499 / JS614) protein is Orotidine 5'-phosphate decarboxylase.